Reading from the N-terminus, the 371-residue chain is MIASYHRPTTALVHLDRIKFNIEQVQHHIPKSAKTFAVVKANAYGHGAVQVAQAIQKQVDGFCVSNLDEALELRQAGLNDFILILGVLLPEEVALAKKENITITVADLDWFDKVQTENIDLAGLSVHVKVDSGMGRIGVRSTAEANQLIAGLQKAGATVNGIFTHFATADEASTVKFSQQLEMFTTLISQLDYKPQTVHASNSATSIWHSDTVMNAVRLGIVMYGLNPSGNALELPYEVKPALELTSALVQVKEVQAGDTVGYGATYTASQAEIIGTVPVGYADGWTRDLQGFHVLVNGHYCEIVGRVSMDQITIRLPKAYPLGTKVTLIGQDGHETISATDVAEKRETINYEVLCLISDRVPRKYDKKFS.

K40 serves as the catalytic Proton acceptor; specific for D-alanine. The residue at position 40 (K40) is an N6-(pyridoxal phosphate)lysine. R136 is a substrate binding site. Y263 functions as the Proton acceptor; specific for L-alanine in the catalytic mechanism. M310 lines the substrate pocket.

This sequence belongs to the alanine racemase family. The cofactor is pyridoxal 5'-phosphate.

It catalyses the reaction L-alanine = D-alanine. It functions in the pathway amino-acid biosynthesis; D-alanine biosynthesis; D-alanine from L-alanine: step 1/1. Catalyzes the interconversion of L-alanine and D-alanine. May also act on other amino acids. The chain is Alanine racemase (alr) from Streptococcus mutans serotype c (strain ATCC 700610 / UA159).